We begin with the raw amino-acid sequence, 612 residues long: MDIKKLQDYQKHIRNFSIVAHIDHGKSTIADRILELTDTVSERQMKNQLLDDMPLERQRGITIKLNSVEVKYHAKDGETYIFHLIDTPGHVDFSYEVSRSLAACEGALLVVDATQGVQAQTLANTYLAIDDDLEILPVINKIDLPSADPEMCKNEIEEMIGLDASDAVEVSGKTGQGIPELLEEIVKKVPAPDGDLNAPLKALIFDSKYDDYRGVVLSVRIEEGTVKPGDKIRIMNTGKEFEVTEVGVSSPHPVKKDMLIAGDVGYLTANIKSVRETRVGDTITSAETPTEKPLPGYRQIPPMVYSGMYPVDNQKYDDLKEALQKLQLNDAALEFEPETSQALGFGFRCGFLGLLHMDVVQERLEQEFGMDLIMTAPSVDYHAIMNDGSTKLIDNPADLPDAGEYKEVQEPYVKAEIMVPNDFVGPVMELCQRKRGEFVTMDYLDKYRVNVIYNMPLAEIIYDFFDELKSSTKGYASLDYEITGYRATDLVKIDMLLNKEPIDALSFIAHREEAQNRARQMTTMLKKLIPRQNFEVDIQGAIGAKIISRATIKPYRKDVTWKIHTGDPDRRAKLLEKQRRGKKRMKAVGRVEVPQDAFMAVLKMNDDDIKGK.

The tr-type G domain occupies 11-193 (KHIRNFSIVA…EIVKKVPAPD (183 aa)). GTP-binding positions include 23–28 (DHGKST) and 140–143 (NKID).

It belongs to the TRAFAC class translation factor GTPase superfamily. Classic translation factor GTPase family. LepA subfamily.

The protein resides in the cell membrane. The enzyme catalyses GTP + H2O = GDP + phosphate + H(+). Its function is as follows. Required for accurate and efficient protein synthesis under certain stress conditions. May act as a fidelity factor of the translation reaction, by catalyzing a one-codon backward translocation of tRNAs on improperly translocated ribosomes. Back-translocation proceeds from a post-translocation (POST) complex to a pre-translocation (PRE) complex, thus giving elongation factor G a second chance to translocate the tRNAs correctly. Binds to ribosomes in a GTP-dependent manner. The chain is Elongation factor 4 from Lactobacillus johnsonii (strain CNCM I-12250 / La1 / NCC 533).